The chain runs to 24 residues: KDALEHTGFAPKKDGEEHVEWNYN.

The interval 1–24 (KDALEHTGFAPKKDGEEHVEWNYN) is disordered.

In terms of processing, glycosylated. As to expression, nacreous and prismatic layers of the shell.

In terms of biological role, calcium-binding. The protein is Calcium-binding shell glycoprotein P50 of Unio pictorum (Painter's mussel).